A 1017-amino-acid chain; its full sequence is GPI ethanolamine phosphate transferase 3 (1017 aa).

A helical membrane pass occupies residues 34-54 (FYIILLVFIAILQFISIAFFT). 5 N-linked (GlcNAc...) asparagine glycosylation sites follow: Asn-66, Asn-71, Asn-100, Asn-182, and Asn-203. Residues 347-367 (VSSLALLMGQPIPFNNLGWPI) form a helical membrane-spanning segment. N-linked (GlcNAc...) asparagine glycosylation occurs at Asn-411. The next 6 helical transmembrane spans lie at 457–477 (LLAT…SIVV), 484–504 (FVPG…GIFY), 515–535 (FWGT…ITIF), 558–578 (IAVM…FTIW), 582–602 (IVAF…VFLP), and 644–664 (LGGY…MITI). 2 N-linked (GlcNAc...) asparagine glycosylation sites follow: Asn-681 and Asn-682. Residues 685–705 (WWVLGLCFLMIFILPACITGY) traverse the membrane as a helical segment. The N-linked (GlcNAc...) asparagine glycan is linked to Asn-707. A helical membrane pass occupies residues 715-735 (AAPIWINVFLKGILGLNFVYW). An N-linked (GlcNAc...) asparagine glycan is attached at Asn-742. 6 helical membrane passes run 765–785 (IIAG…PLCI), 806–826 (NIYG…ILLF), 829–849 (PLAQ…LEII), 903–923 (IAII…VALL), 947–967 (GILL…VTHF), and 981–1001 (FIFA…GTIA).

It belongs to the PIGG/PIGN/PIGO family. PIGO subfamily. Glycosylated.

It is found in the endoplasmic reticulum membrane. The protein operates within glycolipid biosynthesis; glycosylphosphatidylinositol-anchor biosynthesis. Functionally, involved in glycosylphosphatidylinositol-anchor biosynthesis. Transfers ethanolamine phosphate to the GPI third mannose which links the GPI-anchor to the C-terminus of the proteins by an amide bond. Involved in cell wall biosynthesis. This Saccharomyces cerevisiae (strain ATCC 204508 / S288c) (Baker's yeast) protein is GPI ethanolamine phosphate transferase 3 (GPI13).